We begin with the raw amino-acid sequence, 419 residues long: Acyl transferase 9 (419 aa).

Residues H161 and D362 each act as proton acceptor in the active site.

It belongs to the plant acyltransferase family.

Involved in the incorporation of ferulate into the cell wall. May act as arabinoxylan feruloyl transferase. This Oryza sativa subsp. japonica (Rice) protein is Acyl transferase 9.